The chain runs to 329 residues: Probable acyltransferase FabY (329 aa).

One can recognise an N-acetyltransferase domain in the interval 18–162; the sequence is YHLRVPQTEE…RHFLMIKPVA (145 aa).

This sequence belongs to the acetyltransferase family. FabY subfamily.

The protein operates within lipid metabolism; fatty acid biosynthesis. Functionally, supports initiation of fatty acid biosynthesis in the absence of FabH. The sequence is that of Probable acyltransferase FabY from Escherichia coli O157:H7.